A 178-amino-acid polypeptide reads, in one-letter code: Arginine repressor (178 aa).

A disordered region spans residues 1 to 21 (MSQAQENEHAGPAVPQTRTAR).

It belongs to the ArgR family.

It is found in the cytoplasm. Its pathway is amino-acid biosynthesis; L-arginine biosynthesis [regulation]. In terms of biological role, regulates arginine biosynthesis genes. In Streptomyces avermitilis (strain ATCC 31267 / DSM 46492 / JCM 5070 / NBRC 14893 / NCIMB 12804 / NRRL 8165 / MA-4680), this protein is Arginine repressor.